The following is a 763-amino-acid chain: Thyrotropin receptor (763 aa).

The first 21 residues, 1-21 (MRQTPLLQLALLLSLPRSLGG), serve as a signal peptide directing secretion. Residues 22 to 412 (KGCPSPPCEC…EFNPCEDIMG (391 aa)) are Extracellular-facing. Cysteine 31 and cysteine 41 are oxidised to a cystine. N-linked (GlcNAc...) asparagine glycosylation is found at asparagine 77 and asparagine 99. 7 LRR repeats span residues 100–124 (LSKM…ALKE), 125–150 (LPLL…VYST), 151–174 (DVFF…AFQG), 176–199 (CNET…AFNG), 201–223 (KLDA…AFGG), 225–248 (YSGP…GLEH), and 264–288 (PLTL…AFKN). Residues asparagine 177 and asparagine 198 are each glycosylated (N-linked (GlcNAc...) asparagine). N-linked (GlcNAc...) asparagine glycosylation occurs at asparagine 302. Tyrosine 384 is subject to Sulfotyrosine. The chain crosses the membrane as a helical span at residues 413–440 (YKFLRIVVWFVSLLALLGNVFVLIILLT). Topologically, residues 441–449 (SHYKLTVPR) are cytoplasmic. Residues 450-472 (FLMCNLAFADFCMGMYLLLIASV) form a helical membrane-spanning segment. Topologically, residues 473 to 493 (DLYTHSEYYNHAIDWQTGPGC) are extracellular. A disulfide bridge links cysteine 493 with cysteine 568. The chain crosses the membrane as a helical span at residues 494–516 (NAAGFFTVFASELSVYTLTVITL). Over 517–536 (ERWYAITFAMRLDRKMRLRH) the chain is Cytoplasmic. Residues 537-559 (AYAIMVGGWVCCFLLALLPLVGI) traverse the membrane as a helical segment. The Extracellular portion of the chain corresponds to 560–579 (SSYAKVSICLPMDTETPLAL). Residues 580 to 601 (AYIILVLLLNIVAFIIVCSCYV) traverse the membrane as a helical segment. Over 602–624 (KIYITVRNPQYNTGDKDTKIAKR) the chain is Cytoplasmic. A helical transmembrane segment spans residues 625–648 (MAVLIFTDFMCMAPISFYALSALM). Residues 649-659 (NKPLITVTNSK) lie on the Extracellular side of the membrane. A helical membrane pass occupies residues 660–681 (ILLVLFYPLNSCANPFLYAIFT). Over 682-763 (KTFQRDVFIL…ISKEYNQTVL (82 aa)) the chain is Cytoplasmic. Residues 761–763 (TVL) carry the PDZ-binding motif.

Belongs to the G-protein coupled receptor 1 family. FSH/LSH/TSH subfamily. Interacts with heterodimer GPHA2:GPHB5; this interaction stimulates cAMP production. Interacts (via the PDZ-binding motif) with SCRIB; regulates TSHR trafficking and function. Post-translationally, glycosylated. In terms of processing, sulfated. Sulfation on Tyr-384 plays a role in thyrotropin receptor binding and activation.

The protein resides in the cell membrane. It is found in the basolateral cell membrane. Receptor for the thyroid-stimulating hormone (TSH) or thyrotropin. Also acts as a receptor for the heterodimeric glycoprotein hormone (GPHA2:GPHB5) or thyrostimulin. The activity of this receptor is mediated by G proteins which activate adenylate cyclase. Plays a central role in controlling thyroid cell metabolism. This Felis catus (Cat) protein is Thyrotropin receptor (TSHR).